The following is a 404-amino-acid chain: MKIPIYMDYHATTPVDPRVLEAMLPYFTTEYGNAASKSHAFGWKAEEAVEAAREEVAKLIGASAKEIVWTSGATESDNLAVKGAAHFYQAKGKHLVTCKTEHKAVLDSMHALERQGFEVTFLEPERDGRLDPAKVKAALRPDTILVSVMHANNETGVVHPIAEIGRIAREAGVVFHCDAVQSIGKIPFDVEAMNVDLASISAHKMYGPKGMGALYVRRKPRVRLVAEMDGGGHERGFRSGTLNVPGIVGMGKAAELARLERDAEAVRVTALRERLRKGLEKELDLLTVNGSLEHRVPGNLNVSFAYVEGEALMMAVKDVAVSSGSACTSASLEPSYVLRAMGVSEDLAHSSIRFGLGRFSTEEEVDYAIRLFGEKVRKLREMSPLYEMVKDGVDLNQIEWANPH.

Pyridoxal 5'-phosphate is bound by residues 73–74 (AT), Asn-153, Gln-181, and 201–203 (SAH). Lys-204 is modified (N6-(pyridoxal phosphate)lysine). Thr-241 is a pyridoxal 5'-phosphate binding site. The active-site Cysteine persulfide intermediate is the Cys-327. Cys-327 serves as a coordination point for [2Fe-2S] cluster.

Belongs to the class-V pyridoxal-phosphate-dependent aminotransferase family. NifS/IscS subfamily. As to quaternary structure, homodimer. Forms a heterotetramer with IscU, interacts with other sulfur acceptors. Pyridoxal 5'-phosphate serves as cofactor.

The protein localises to the cytoplasm. It catalyses the reaction (sulfur carrier)-H + L-cysteine = (sulfur carrier)-SH + L-alanine. It participates in cofactor biosynthesis; iron-sulfur cluster biosynthesis. Master enzyme that delivers sulfur to a number of partners involved in Fe-S cluster assembly, tRNA modification or cofactor biosynthesis. Catalyzes the removal of elemental sulfur atoms from cysteine to produce alanine. Functions as a sulfur delivery protein for Fe-S cluster synthesis onto IscU, an Fe-S scaffold assembly protein, as well as other S acceptor proteins. The protein is Cysteine desulfurase IscS of Anaeromyxobacter sp. (strain K).